A 259-amino-acid polypeptide reads, in one-letter code: Ribosomal RNA small subunit methyltransferase J (259 aa).

Residues 107–108 (RD), 123–124 (ER), 159–160 (SS), and Asp177 each bind S-adenosyl-L-methionine.

This sequence belongs to the methyltransferase superfamily. RsmJ family.

The protein localises to the cytoplasm. The catalysed reaction is guanosine(1516) in 16S rRNA + S-adenosyl-L-methionine = N(2)-methylguanosine(1516) in 16S rRNA + S-adenosyl-L-homocysteine + H(+). In terms of biological role, specifically methylates the guanosine in position 1516 of 16S rRNA. In Shewanella loihica (strain ATCC BAA-1088 / PV-4), this protein is Ribosomal RNA small subunit methyltransferase J.